Consider the following 557-residue polypeptide: Glutathione hydrolase proenzyme (557 aa).

The first 24 residues, 1 to 24, serve as a signal peptide directing secretion; that stretch reads MQPVLFRTLSLGVAIAAASSSAFA. Residue Arg-94 participates in L-glutamate binding. Thr-364 acts as the Nucleophile in catalysis. L-glutamate contacts are provided by residues Thr-382, Asn-384, Glu-403, Asp-406, 435–436, and 456–457; these read SS and GG.

It belongs to the gamma-glutamyltransferase family. This enzyme consists of two polypeptide chains, which are synthesized in precursor form from a single polypeptide. Cleaved by autocatalysis into a large and a small subunit.

It localises to the periplasm. The enzyme catalyses an N-terminal (5-L-glutamyl)-[peptide] + an alpha-amino acid = 5-L-glutamyl amino acid + an N-terminal L-alpha-aminoacyl-[peptide]. It carries out the reaction glutathione + H2O = L-cysteinylglycine + L-glutamate. It catalyses the reaction an S-substituted glutathione + H2O = an S-substituted L-cysteinylglycine + L-glutamate. The protein operates within sulfur metabolism; glutathione metabolism. The protein is Glutathione hydrolase proenzyme (ggt) of Pseudomonas aeruginosa (strain ATCC 15692 / DSM 22644 / CIP 104116 / JCM 14847 / LMG 12228 / 1C / PRS 101 / PAO1).